Reading from the N-terminus, the 356-residue chain is Leucine carboxyl methyltransferase 1 (356 aa).

S-adenosyl-L-methionine is bound by residues R78, G101, D127, 183-184, and E218; that span reads DL.

It belongs to the methyltransferase superfamily. LCMT family.

The enzyme catalyses [phosphatase 2A protein]-C-terminal L-leucine + S-adenosyl-L-methionine = [phosphatase 2A protein]-C-terminal L-leucine methyl ester + S-adenosyl-L-homocysteine. In terms of biological role, methylates the carboxyl group of the C-terminal leucine residue of protein phosphatase 2A catalytic subunits to form alpha-leucine ester residues. In Cryptococcus neoformans var. neoformans serotype D (strain JEC21 / ATCC MYA-565) (Filobasidiella neoformans), this protein is Leucine carboxyl methyltransferase 1 (PPM1).